Consider the following 380-residue polypeptide: Probable tRNA sulfurtransferase (380 aa).

The region spanning 58–162 (EEVIERLKKV…MAFVYAGVIE (105 aa)) is the THUMP domain. ATP is bound by residues 178–179 (LL), 203–204 (YF), Arg-260, Gly-282, and Gln-291.

This sequence belongs to the ThiI family.

It localises to the cytoplasm. The enzyme catalyses [ThiI sulfur-carrier protein]-S-sulfanyl-L-cysteine + a uridine in tRNA + 2 reduced [2Fe-2S]-[ferredoxin] + ATP + H(+) = [ThiI sulfur-carrier protein]-L-cysteine + a 4-thiouridine in tRNA + 2 oxidized [2Fe-2S]-[ferredoxin] + AMP + diphosphate. It carries out the reaction [ThiS sulfur-carrier protein]-C-terminal Gly-Gly-AMP + S-sulfanyl-L-cysteinyl-[cysteine desulfurase] + AH2 = [ThiS sulfur-carrier protein]-C-terminal-Gly-aminoethanethioate + L-cysteinyl-[cysteine desulfurase] + A + AMP + 2 H(+). The protein operates within cofactor biosynthesis; thiamine diphosphate biosynthesis. Catalyzes the ATP-dependent transfer of a sulfur to tRNA to produce 4-thiouridine in position 8 of tRNAs, which functions as a near-UV photosensor. Also catalyzes the transfer of sulfur to the sulfur carrier protein ThiS, forming ThiS-thiocarboxylate. This is a step in the synthesis of thiazole, in the thiamine biosynthesis pathway. The sulfur is donated as persulfide by IscS. In Thermoanaerobacter sp. (strain X514), this protein is Probable tRNA sulfurtransferase.